The sequence spans 203 residues: Pyridoxal 5'-phosphate synthase subunit PdxT (203 aa).

49–51 lines the L-glutamine pocket; the sequence is GES. C81 acts as the Nucleophile in catalysis. L-glutamine is bound by residues R110 and 139–140; that span reads IR. Active-site charge relay system residues include H175 and E177.

It belongs to the glutaminase PdxT/SNO family. In terms of assembly, in the presence of PdxS, forms a dodecamer of heterodimers. Only shows activity in the heterodimer.

The catalysed reaction is aldehydo-D-ribose 5-phosphate + D-glyceraldehyde 3-phosphate + L-glutamine = pyridoxal 5'-phosphate + L-glutamate + phosphate + 3 H2O + H(+). The enzyme catalyses L-glutamine + H2O = L-glutamate + NH4(+). Its pathway is cofactor biosynthesis; pyridoxal 5'-phosphate biosynthesis. Functionally, catalyzes the hydrolysis of glutamine to glutamate and ammonia as part of the biosynthesis of pyridoxal 5'-phosphate. The resulting ammonia molecule is channeled to the active site of PdxS. The polypeptide is Pyridoxal 5'-phosphate synthase subunit PdxT (Parafrankia sp. (strain EAN1pec)).